A 351-amino-acid chain; its full sequence is Hydroxymethylglutaryl-CoA synthase (351 aa).

Residue Glu80 is the Proton donor/acceptor of the active site. Cys112 serves as the catalytic Acyl-thioester intermediate. (3S)-3-hydroxy-3-methylglutaryl-CoA-binding residues include Cys112 and Ser153. Residue Arg199 participates in CoA binding. Residues Thr201 and His234 each contribute to the (3S)-3-hydroxy-3-methylglutaryl-CoA site. His234 acts as the Proton donor/acceptor in catalysis. A CoA-binding site is contributed by Lys239. Positions 243, 266, and 296 each coordinate (3S)-3-hydroxy-3-methylglutaryl-CoA.

This sequence belongs to the thiolase-like superfamily. Archaeal HMG-CoA synthase family. As to quaternary structure, interacts with acetoacetyl-CoA thiolase that catalyzes the precedent step in the pathway and with a DUF35 protein. The acetoacetyl-CoA thiolase/HMG-CoA synthase complex channels the intermediate via a fused CoA-binding site, which allows for efficient coupling of the endergonic thiolase reaction with the exergonic HMGCS reaction.

It catalyses the reaction acetoacetyl-CoA + acetyl-CoA + H2O = (3S)-3-hydroxy-3-methylglutaryl-CoA + CoA + H(+). The protein operates within metabolic intermediate biosynthesis; (R)-mevalonate biosynthesis; (R)-mevalonate from acetyl-CoA: step 2/3. In terms of biological role, catalyzes the condensation of acetyl-CoA with acetoacetyl-CoA to form 3-hydroxy-3-methylglutaryl-CoA (HMG-CoA). Functions in the mevalonate (MVA) pathway leading to isopentenyl diphosphate (IPP), a key precursor for the biosynthesis of isoprenoid compounds that are building blocks of archaeal membrane lipids. The sequence is that of Hydroxymethylglutaryl-CoA synthase from Thermoplasma volcanium (strain ATCC 51530 / DSM 4299 / JCM 9571 / NBRC 15438 / GSS1).